The chain runs to 160 residues: Major pollen allergen Bet v 1-F/I (160 aa).

Residues Lys55, Tyr82, Tyr84, and Asn101 each contribute to the brassinolide site.

It belongs to the BetVI family.

Its subcellular location is the cytoplasm. Its function is as follows. May be a general steroid carrier protein. This Betula pendula (European white birch) protein is Major pollen allergen Bet v 1-F/I (BETV1F).